Here is a 104-residue protein sequence, read N- to C-terminus: Large ribosomal subunit protein bL21 (104 aa).

The protein belongs to the bacterial ribosomal protein bL21 family. In terms of assembly, part of the 50S ribosomal subunit. Contacts protein L20.

Its function is as follows. This protein binds to 23S rRNA in the presence of protein L20. In Helicobacter hepaticus (strain ATCC 51449 / 3B1), this protein is Large ribosomal subunit protein bL21.